Here is a 922-residue protein sequence, read N- to C-terminus: Isoleucine--tRNA ligase (922 aa).

The short motif at 57–67 (PYANGDIHLGH) is the 'HIGH' region element. Residue Glu-553 coordinates L-isoleucyl-5'-AMP. Positions 594-598 (KMSKS) match the 'KMSKS' region motif. Residue Lys-597 participates in ATP binding. Residues Cys-892, Cys-895, Cys-912, and Cys-915 each coordinate Zn(2+).

It belongs to the class-I aminoacyl-tRNA synthetase family. IleS type 1 subfamily. Monomer. It depends on Zn(2+) as a cofactor.

The protein localises to the cytoplasm. It carries out the reaction tRNA(Ile) + L-isoleucine + ATP = L-isoleucyl-tRNA(Ile) + AMP + diphosphate. Catalyzes the attachment of isoleucine to tRNA(Ile). As IleRS can inadvertently accommodate and process structurally similar amino acids such as valine, to avoid such errors it has two additional distinct tRNA(Ile)-dependent editing activities. One activity is designated as 'pretransfer' editing and involves the hydrolysis of activated Val-AMP. The other activity is designated 'posttransfer' editing and involves deacylation of mischarged Val-tRNA(Ile). This chain is Isoleucine--tRNA ligase, found in Desulfitobacterium hafniense (strain DSM 10664 / DCB-2).